We begin with the raw amino-acid sequence, 79 residues long: Small ribosomal subunit protein bS18 (79 aa).

This sequence belongs to the bacterial ribosomal protein bS18 family. In terms of assembly, part of the 30S ribosomal subunit. Forms a tight heterodimer with protein bS6.

In terms of biological role, binds as a heterodimer with protein bS6 to the central domain of the 16S rRNA, where it helps stabilize the platform of the 30S subunit. The polypeptide is Small ribosomal subunit protein bS18 (Pseudarthrobacter chlorophenolicus (strain ATCC 700700 / DSM 12829 / CIP 107037 / JCM 12360 / KCTC 9906 / NCIMB 13794 / A6) (Arthrobacter chlorophenolicus)).